Here is a 280-residue protein sequence, read N- to C-terminus: Putative ABC transporter ATP-binding protein PYRAB03730 (280 aa).

An ABC transporter domain is found at 4-244 (IEVENVSFKY…VEFLERIGIR (241 aa)). 38–45 (GPSGSGKS) contacts ATP.

The protein belongs to the ABC transporter superfamily.

It localises to the cell membrane. Functionally, probably part of an ABC transporter complex. Responsible for energy coupling to the transport system. This Pyrococcus abyssi (strain GE5 / Orsay) protein is Putative ABC transporter ATP-binding protein PYRAB03730.